Reading from the N-terminus, the 136-residue chain is Histone H3.1 (136 aa).

The disordered stretch occupies residues 1–43 (MARTKQTARKSTGGKAPRKQLATKAARKSAPATGGVKKPHRYR). Arg-3 is modified (asymmetric dimethylarginine; by PRMT6; alternate). Arg-3 bears the Citrulline; alternate mark. Thr-4 is modified (phosphothreonine; by HASPIN and VRK1). Lys-5 is modified (allysine; alternate). Lys-5 carries the N6,N6,N6-trimethyllysine; alternate modification. At Lys-5 the chain carries N6,N6-dimethyllysine; alternate. The residue at position 5 (Lys-5) is an N6-(2-hydroxyisobutyryl)lysine; alternate. Position 5 is an N6-(beta-hydroxybutyryl)lysine; alternate (Lys-5). Lys-5 bears the N6-acetyllysine; alternate mark. The residue at position 5 (Lys-5) is an N6-crotonyllysine; alternate. At Lys-5 the chain carries N6-methyllysine; alternate. Gln-6 carries the 5-glutamyl dopamine; alternate modification. 5-glutamyl serotonin; alternate is present on Gln-6. Thr-7 is subject to Phosphothreonine; by PKC. Arg-9 carries the post-translational modification Citrulline; alternate. Arg-9 is modified (symmetric dimethylarginine; by PRMT5; alternate). At Lys-10 the chain carries N6,N6,N6-trimethyllysine; alternate. An N6,N6-dimethyllysine; alternate modification is found at Lys-10. Position 10 is an N6-(2-hydroxyisobutyryl)lysine; alternate (Lys-10). N6-(beta-hydroxybutyryl)lysine; alternate is present on Lys-10. Lys-10 is modified (N6-acetyllysine; alternate). Position 10 is an N6-crotonyllysine; alternate (Lys-10). Position 10 is an N6-methyllysine; alternate (Lys-10). At Lys-10 the chain carries N6-butyryllysine; alternate. Residue Lys-10 is modified to N6-lactoyllysine; alternate. Ser-11 is modified (ADP-ribosylserine; alternate). Ser-11 is subject to Phosphoserine; alternate; by AURKB, AURKC, RPS6KA3, RPS6KA4 and RPS6KA5. Thr-12 carries the phosphothreonine; by PKC and CHEK1 modification. Lys-15 is modified (N6-(2-hydroxyisobutyryl)lysine; alternate). Position 15 is an N6-(beta-hydroxybutyryl)lysine; alternate (Lys-15). An N6-acetyllysine; alternate modification is found at Lys-15. An N6-lactoyllysine; alternate modification is found at Lys-15. The residue at position 15 (Lys-15) is an N6-glutaryllysine; alternate. The residue at position 15 (Lys-15) is an N6-succinyllysine; alternate. Arg-18 is modified (citrulline; alternate). Arg-18 bears the Asymmetric dimethylarginine; by CARM1; alternate mark. Residues Lys-19 and Lys-24 each carry the N6-(2-hydroxyisobutyryl)lysine; alternate modification. N6-(beta-hydroxybutyryl)lysine; alternate is present on residues Lys-19 and Lys-24. An N6-acetyllysine; alternate mark is found at Lys-19 and Lys-24. An N6-crotonyllysine; alternate mark is found at Lys-19 and Lys-24. 2 positions are modified to N6-methyllysine; alternate: Lys-19 and Lys-24. An N6-butyryllysine; alternate mark is found at Lys-19 and Lys-24. Residues Lys-19 and Lys-24 each carry the N6-lactoyllysine; alternate modification. Lys-19 and Lys-24 each carry N6-glutaryllysine; alternate. Residue Lys-19 is the site of N6-decanoyllysine attachment. The residue at position 27 (Arg-27) is a Citrulline. At Lys-28 the chain carries N6,N6,N6-trimethyllysine; alternate. Residue Lys-28 is modified to N6,N6-dimethyllysine; alternate. Lys-28 carries the N6-(2-hydroxyisobutyryl)lysine; alternate modification. Lys-28 carries the post-translational modification N6-(beta-hydroxybutyryl)lysine; alternate. Position 28 is an N6-acetyllysine; alternate (Lys-28). Residue Lys-28 is modified to N6-crotonyllysine; alternate. Residue Lys-28 is modified to N6-methyllysine; alternate. Lys-28 is subject to N6-lactoyllysine; alternate. Lys-28 is modified (N6-glutaryllysine; alternate). Ser-29 carries the ADP-ribosylserine; alternate modification. Position 29 is a phosphoserine; alternate; by AURKB, AURKC and RPS6KA5 (Ser-29). Residue Lys-37 is modified to N6,N6,N6-trimethyllysine; alternate. Lys-37 is modified (N6,N6-dimethyllysine; alternate). Lys-37 is subject to N6-(2-hydroxyisobutyryl)lysine; alternate. Position 37 is an N6-acetyllysine; alternate (Lys-37). Lys-37 is subject to N6-methyllysine; alternate. Lys-38 carries the post-translational modification N6-methyllysine. Tyr-42 is subject to Phosphotyrosine. Lys-57 carries the N6,N6,N6-trimethyllysine; alternate modification. N6-(2-hydroxyisobutyryl)lysine; alternate is present on Lys-57. N6-(beta-hydroxybutyryl)lysine; alternate is present on Lys-57. N6-acetyllysine; alternate is present on Lys-57. Position 57 is an N6-crotonyllysine; alternate (Lys-57). Position 57 is an N6-lactoyllysine; alternate (Lys-57). Lys-57 is subject to N6-glutaryllysine; alternate. Lys-57 is subject to N6-succinyllysine; alternate. Position 57 is an N6-methyllysine; by EHMT2; alternate (Lys-57). Position 58 is a phosphoserine (Ser-58). Residues Lys-65 and Lys-80 each carry the N6-(2-hydroxyisobutyryl)lysine; alternate modification. An N6-methyllysine; alternate mark is found at Lys-65 and Lys-80. Position 80 is an N6,N6,N6-trimethyllysine; alternate (Lys-80). Lys-80 carries the N6,N6-dimethyllysine; alternate modification. At Lys-80 the chain carries N6-(beta-hydroxybutyryl)lysine; alternate. Lys-80 carries the post-translational modification N6-acetyllysine; alternate. An N6-lactoyllysine; alternate modification is found at Lys-80. At Lys-80 the chain carries N6-glutaryllysine; alternate. Lys-80 is modified (N6-succinyllysine; alternate). Phosphothreonine is present on Thr-81. At Ser-87 the chain carries Phosphoserine. At Thr-108 the chain carries Phosphothreonine. Residues Lys-116 and Lys-123 each carry the N6-acetyllysine; alternate modification. N6-glutaryllysine; alternate occurs at positions 116 and 123. Position 123 is an N6-(2-hydroxyisobutyryl)lysine; alternate (Lys-123). Lys-123 carries the post-translational modification N6-(beta-hydroxybutyryl)lysine; alternate. N6-methyllysine; alternate is present on Lys-123. Lys-123 is modified (N6-succinyllysine; alternate).

It belongs to the histone H3 family. The nucleosome is a histone octamer containing two molecules each of H2A, H2B, H3 and H4 assembled in one H3-H4 heterotetramer and two H2A-H2B heterodimers. The octamer wraps approximately 147 bp of DNA. Interacts with TONSL; CHAF1A; CHAF1B; MCM2 and DNAJC9. Interacts with NASP; NASP is a histone chaperone that stabilizes and maintains a soluble pool of Histone H3-H4 dimers. In terms of processing, acetylation is generally linked to gene activation. Acetylation on Lys-10 (H3K9ac) impairs methylation at Arg-9 (H3R8me2s). Acetylation on Lys-19 (H3K18ac) and Lys-24 (H3K24ac) favors methylation at Arg-18 (H3R17me). Acetylation at Lys-123 (H3K122ac) by EP300/p300 plays a central role in chromatin structure: localizes at the surface of the histone octamer and stimulates transcription, possibly by promoting nucleosome instability. Citrullination at Arg-9 (H3R8ci) and/or Arg-18 (H3R17ci) by PADI4 impairs methylation and represses transcription. Post-translationally, asymmetric dimethylation at Arg-18 (H3R17me2a) by CARM1 is linked to gene activation. Symmetric dimethylation at Arg-9 (H3R8me2s) by PRMT5 is linked to gene repression. Asymmetric dimethylation at Arg-3 (H3R2me2a) by PRMT6 is linked to gene repression and is mutually exclusive with H3 Lys-5 methylation (H3K4me2 and H3K4me3). H3R2me2a is present at the 3' of genes regardless of their transcription state and is enriched on inactive promoters, while it is absent on active promoters. In terms of processing, methylation at Lys-5 (H3K4me), Lys-37 (H3K36me) and Lys-80 (H3K79me) are linked to gene activation. Methylation at Lys-5 (H3K4me) facilitates subsequent acetylation of H3 and H4. Methylation at Lys-80 (H3K79me) is associated with DNA double-strand break (DSB) responses and is a specific target for TP53BP1. Methylation at Lys-10 (H3K9me) and Lys-28 (H3K27me) are linked to gene repression. Methylation at Lys-10 (H3K9me) is a specific target for HP1 proteins (CBX1, CBX3 and CBX5) and prevents subsequent phosphorylation at Ser-11 (H3S10ph) and acetylation of H3 and H4. Methylation at Lys-5 (H3K4me) and Lys-80 (H3K79me) require preliminary monoubiquitination of H2B at 'Lys-120'. Methylation at Lys-10 (H3K9me) and Lys-28 (H3K27me) are enriched in inactive X chromosome chromatin. Monomethylation at Lys-57 (H3K56me1) by EHMT2/G9A in G1 phase promotes interaction with PCNA and is required for DNA replication. Phosphorylated at Thr-4 (H3T3ph) by VRK1. Phosphorylated at Thr-4 (H3T3ph) by HASPIN during prophase and dephosphorylated during anaphase. Phosphorylation at Ser-11 (H3S10ph) by AURKB is crucial for chromosome condensation and cell-cycle progression during mitosis and meiosis. In addition phosphorylation at Ser-11 (H3S10ph) by RPS6KA4 and RPS6KA5 is important during interphase because it enables the transcription of genes following external stimulation, like mitogens, stress, growth factors or UV irradiation and result in the activation of genes, such as c-fos and c-jun. Phosphorylation at Ser-11 (H3S10ph), which is linked to gene activation, prevents methylation at Lys-10 (H3K9me) but facilitates acetylation of H3 and H4. Phosphorylation at Ser-11 (H3S10ph) by AURKB mediates the dissociation of HP1 proteins (CBX1, CBX3 and CBX5) from heterochromatin. Phosphorylation at Ser-11 (H3S10ph) is also an essential regulatory mechanism for neoplastic cell transformation. Phosphorylated at Ser-29 (H3S28ph) by MAP3K20 isoform 1, RPS6KA5 or AURKB during mitosis or upon ultraviolet B irradiation. Phosphorylation at Thr-7 (H3T6ph) by PRKCB is a specific tag for epigenetic transcriptional activation that prevents demethylation of Lys-5 (H3K4me) by LSD1/KDM1A. At centromeres, specifically phosphorylated at Thr-12 (H3T11ph) from prophase to early anaphase, by DAPK3 and PKN1. Phosphorylation at Thr-12 (H3T11ph) by PKN1 or isoform M2 of PKM (PKM2) is a specific tag for epigenetic transcriptional activation that promotes demethylation of Lys-10 (H3K9me) by KDM4C/JMJD2C. Phosphorylation at Thr-12 (H3T11ph) by chromatin-associated CHEK1 regulates the transcription of cell cycle regulatory genes by modulating acetylation of Lys-10 (H3K9ac). Phosphorylation at Tyr-42 (H3Y41ph) by JAK2 promotes exclusion of CBX5 (HP1 alpha) from chromatin. Post-translationally, monoubiquitinated by RAG1 in lymphoid cells, monoubiquitination is required for V(D)J recombination. Ubiquitinated by the CUL4-DDB-RBX1 complex in response to ultraviolet irradiation. This may weaken the interaction between histones and DNA and facilitate DNA accessibility to repair proteins. In terms of processing, lysine deamination at Lys-5 (H3K4all) to form allysine is mediated by LOXL2. Allysine formation by LOXL2 only takes place on H3K4me3 and results in gene repression. Crotonylation (Kcr) is specifically present in male germ cells and marks testis-specific genes in post-meiotic cells, including X-linked genes that escape sex chromosome inactivation in haploid cells. Crotonylation marks active promoters and enhancers and confers resistance to transcriptional repressors. It is also associated with post-meiotically activated genes on autosomes. Post-translationally, butyrylation of histones marks active promoters and competes with histone acetylation. It is present during late spermatogenesis. In terms of processing, succinylation at Lys-80 (H3K79succ) by KAT2A takes place with a maximum frequency around the transcription start sites of genes. It gives a specific tag for epigenetic transcription activation. Desuccinylation at Lys-123 (H3K122succ) by SIRT7 in response to DNA damage promotes chromatin condensation and double-strand breaks (DSBs) repair. Serine ADP-ribosylation by PARP1 or PARP2 constitutes the primary form of ADP-ribosylation of proteins in response to DNA damage. Serine ADP-ribosylation at Ser-11 (H3S10ADPr) promotes recruitment of CHD1L. H3S10ADPr is mutually exclusive with phosphorylation at Ser-11 (H3S10ph) and impairs acetylation at Lys-10 (H3K9ac). Post-translationally, serotonylated by TGM2 at Gln-6 (H3Q5ser) during serotonergic neuron differentiation. H3Q5ser is associated with trimethylation of Lys-5 (H3K4me3) and enhances general transcription factor IID (TFIID) complex-binding to H3K4me3, thereby facilitating transcription. In terms of processing, dopaminylated by TGM2 at Gln-6 (H3Q5dop) in ventral tegmental area (VTA) neurons. H3Q5dop mediates neurotransmission-independent role of nuclear dopamine by regulating relapse-related transcriptional plasticity in the reward system. Lactylated in macrophages by EP300/P300 by using lactoyl-CoA directly derived from endogenous or exogenous lactate, leading to stimulates gene transcription.

It localises to the nucleus. The protein localises to the chromosome. Functionally, core component of nucleosome. Nucleosomes wrap and compact DNA into chromatin, limiting DNA accessibility to the cellular machineries which require DNA as a template. Histones thereby play a central role in transcription regulation, DNA repair, DNA replication and chromosomal stability. DNA accessibility is regulated via a complex set of post-translational modifications of histones, also called histone code, and nucleosome remodeling. This Homo sapiens (Human) protein is Histone H3.1.